The primary structure comprises 339 residues: Aspartate carbamoyltransferase catalytic subunit (339 aa).

Carbamoyl phosphate is bound by residues arginine 60 and threonine 61. Position 88 (lysine 88) interacts with L-aspartate. Positions 110, 143, and 146 each coordinate carbamoyl phosphate. L-aspartate contacts are provided by arginine 183 and arginine 254. 2 residues coordinate carbamoyl phosphate: glycine 295 and proline 296.

This sequence belongs to the aspartate/ornithine carbamoyltransferase superfamily. ATCase family. In terms of assembly, heterododecamer (2C3:3R2) of six catalytic PyrB chains organized as two trimers (C3), and six regulatory PyrI chains organized as three dimers (R2).

The catalysed reaction is carbamoyl phosphate + L-aspartate = N-carbamoyl-L-aspartate + phosphate + H(+). It functions in the pathway pyrimidine metabolism; UMP biosynthesis via de novo pathway; (S)-dihydroorotate from bicarbonate: step 2/3. Catalyzes the condensation of carbamoyl phosphate and aspartate to form carbamoyl aspartate and inorganic phosphate, the committed step in the de novo pyrimidine nucleotide biosynthesis pathway. The chain is Aspartate carbamoyltransferase catalytic subunit from Prochlorococcus marinus (strain MIT 9312).